The chain runs to 382 residues: Plasmid replication initiator protein TrfA (382 aa).

A toxic in E.coli strain K12 / DH5-alpha; may be membrane-associated region spans residues 1–163; sequence MNRTFDRKAY…TARSALFTTR (163 aa). Positions 246–265 form a DNA-binding region, H-T-H motif; it reads SRLQATAMGFTSDRVGHLES. The hydrophobic region (HR); required for membrane association stretch occupies residues 286–297; it reads VLIDEEIVVLFA.

In terms of assembly, forms a dimer in solution, binds DNA as a monomer. Both mononer and dimer of the short form interact with Hda (Dp).

Its subcellular location is the cell inner membrane. Functionally, required for initiation of plasmid DNA replication, along with host-derived DnaA and other host proteins. Both forms of the protein are capable of initiating plasmid replication in a number of Gram-negative bacteria. Binds to 8 17-base pair repeat sequences (iterons) in the RK2 minimal replication origin (oriV), opening the origin of replication. oriV opening does not absolutely require the presence of nucleotides; formation of open complex is somewhat enhanced by ATP or ATP gamma S, while DnaA or HU is required for full opening. Also involved in plasmid copy number control, promoting intermolecular coupling of protein bound iterons at oriV, which inhibits replication initiation. The polypeptide is Plasmid replication initiator protein TrfA (trfA) (Escherichia coli).